The primary structure comprises 201 residues: Small ribosomal subunit protein uS4 (201 aa).

Residues 91-151 (SRLDNVVYRA…EKSRKMVWFD (61 aa)) form the S4 RNA-binding domain.

The protein belongs to the universal ribosomal protein uS4 family. As to quaternary structure, part of the 30S ribosomal subunit. Contacts protein S5. The interaction surface between S4 and S5 is involved in control of translational fidelity.

Its function is as follows. One of the primary rRNA binding proteins, it binds directly to 16S rRNA where it nucleates assembly of the body of the 30S subunit. In terms of biological role, with S5 and S12 plays an important role in translational accuracy. This chain is Small ribosomal subunit protein uS4, found in Corynebacterium kroppenstedtii (strain DSM 44385 / JCM 11950 / CIP 105744 / CCUG 35717).